Consider the following 800-residue polypeptide: Mitogen-activated protein kinase kinase kinase 20 (800 aa).

Position 2 is an N-acetylserine (Ser2). 3 positions are modified to phosphoserine; by autocatalysis: Ser2, Ser3, and Ser7. Residues 16–277 form the Protein kinase domain; the sequence is LQFFENCGGG…SLPDKCNSFL (262 aa). ATP-binding positions include 22–30 and Lys45; that span reads CGGGSFGSV. Asp133 (proton acceptor) is an active-site residue. Residue Thr161 is modified to Phosphothreonine; by autocatalysis. The residue at position 165 (Ser165) is a Phosphoserine; by autocatalysis. Ser275 is modified (phosphoserine). Residues 287–308 are leucine-zipper; that stretch reads IEATLERLKKLERDLSFKEQEL. Position 302 is a phosphoserine; by autocatalysis (Ser302). 5 positions are modified to phosphoserine: Trp339, Glu429, Lys434, Asp454, and Ser567. One can recognise an SAM domain in the interval 339–410; the sequence is WTEDDVYCWV…KSAIEKLTHD (72 aa). Thr586 carries the phosphothreonine; by autocatalysis modification. Ser587 bears the Phosphoserine; by autocatalysis mark. Phosphoserine occurs at positions 593 and 599. Residue Thr628 is modified to Phosphothreonine. Phosphoserine is present on residues Ser633, Ser637, and Ser648. Phosphoserine; by autocatalysis occurs at positions 649 and 660. Positions 652–666 are enriched in polar residues; the sequence is LNSRDSGFSSGNTDT. The tract at residues 652–800 is disordered; sequence LNSRDSGFSS…RGDHRGWRNF (149 aa). Thr664 carries the phosphothreonine; by autocatalysis modification. Basic and acidic residues predominate over residues 667 to 678; the sequence is SSERGRYSDRSR. A sensing domain (S) region spans residues 670–713; that stretch reads RGRYSDRSRNKYGRGSISLNSSPRGRYSGKSQHSTPSRGRYPGK. Ser685 is modified (phosphoserine). Polar residues-rich tracts occupy residues 686 to 706 and 717 to 726; these read ISLN…STPS and VSQSALNPHQ. 2 positions are modified to phosphoserine; by autocatalysis: Ser718 and Ser720. Phosphoserine occurs at positions 727 and 733. Over residues 728–738 the composition is skewed to basic and acidic residues; it reads PDFKRSPRDLH. Thr742 carries the phosphothreonine; by autocatalysis modification. Composition is skewed to basic and acidic residues over residues 750–763 and 785–800; these read PETD…DSKV and TNKE…WRNF. Residues 774–800 form a C-terminal domain (CTD) region; that stretch reads RKKPHRPSPAKTNKERARGDHRGWRNF.

This sequence belongs to the protein kinase superfamily. STE Ser/Thr protein kinase family. MAP kinase kinase kinase subfamily. As to quaternary structure, homodimer. Interacts with ZNF33A. Component of a signaling complex containing at least AKAP13, PKN1, MAPK14, MAP3K20 and MAP2K3. Within this complex, AKAP13 interacts directly with PKN1, which in turn recruits MAPK14, MAP2K3 and MAP3K20. Interacts with EIF2AK4/GCN2; promoting EIF2AK4/GCN2 kinase activity. Interacts with isoform ZAKbeta. In terms of assembly, interacts with isoform ZAKalpha. Requires Mg(2+) as cofactor. Activated by phosphorylation by PKN1, followed by autophosphorylation on Thr-161 and Ser-165. Autophosphorylation in response to ribotoxic stress promotes dissociation from colliding ribosomes and activation. Ubiquitously expressed. Isoform ZAKbeta is the predominant form in all tissues examined, except for liver, in which isoform ZAKalpha is more highly expressed.

It localises to the cytoplasm. Its subcellular location is the nucleus. It carries out the reaction L-seryl-[protein] + ATP = O-phospho-L-seryl-[protein] + ADP + H(+). The enzyme catalyses L-threonyl-[protein] + ATP = O-phospho-L-threonyl-[protein] + ADP + H(+). With respect to regulation, activated in response to stress, such as ribosomal stress, osmotic shock and ionizing radiation. Activated by phosphorylation by PKN1, followed by autophosphorylation on Thr-161 and Ser-165. Inhibited by nilotinib, sorafenib, dabrafenib, rebastinib and vemurafenib. Selectively inhibited by N-(3)-((1H-Pyrazolo[3,4-b]pyridin-5-yl)ethynyl)benzenesulfonamide compound 3h. Selectively inhibited by 1,2,3-triazole benzenesulfonamides. Stress-activated component of a protein kinase signal transduction cascade that promotes programmed cell death in response to various stress, such as ribosomal stress, osmotic shock and ionizing radiation. Acts by catalyzing phosphorylation of MAP kinase kinases, leading to activation of the JNK (MAPK8/JNK1, MAPK9/JNK2 and/or MAPK10/JNK3) and MAP kinase p38 (MAPK11, MAPK12, MAPK13 and/or MAPK14) pathways. Activates JNK through phosphorylation of MAP2K4/MKK4 and MAP2K7/MKK7, and MAP kinase p38 gamma (MAPK12) via phosphorylation of MAP2K3/MKK3 and MAP2K6/MKK6. Involved in stress associated with adrenergic stimulation: contributes to cardiac decompensation during periods of acute cardiac stress. May be involved in regulation of S and G2 cell cycle checkpoint by mediating phosphorylation of CHEK2. Its function is as follows. Key component of the stress-activated protein kinase signaling cascade in response to ribotoxic stress or UV-B irradiation. Acts as the proximal sensor of ribosome collisions during the ribotoxic stress response (RSR): directly binds to the ribosome by inserting its flexible C-terminus into the ribosomal intersubunit space, thereby acting as a sentinel for colliding ribosomes. Upon ribosome collisions, activates either the stress-activated protein kinase signal transduction cascade or the integrated stress response (ISR), leading to programmed cell death or cell survival, respectively. Dangerous levels of ribosome collisions trigger the autophosphorylation and activation of MAP3K20, which dissociates from colliding ribosomes and phosphorylates MAP kinase kinases, leading to activation of the JNK and MAP kinase p38 pathways that promote programmed cell death. Less dangerous levels of ribosome collisions trigger the integrated stress response (ISR): MAP3K20 activates EIF2AK4/GCN2 independently of its protein-kinase activity, promoting EIF2AK4/GCN2-mediated phosphorylation of EIF2S1/eIF-2-alpha. Also part of the stress-activated protein kinase signaling cascade triggering the NLRP1 inflammasome in response to UV-B irradiation: ribosome collisions activate MAP3K20, which directly phosphorylates NLRP1, leading to activation of the NLRP1 inflammasome and subsequent pyroptosis. NLRP1 is also phosphorylated by MAP kinase p38 downstream of MAP3K20. Also acts as a histone kinase by phosphorylating histone H3 at 'Ser-28' (H3S28ph). In terms of biological role, isoform that lacks the C-terminal region that mediates ribosome-binding: does not act as a sensor of ribosome collisions in response to ribotoxic stress. May act as an antagonist of isoform ZAKalpha: interacts with isoform ZAKalpha, leading to decrease the expression of isoform ZAKalpha. The chain is Mitogen-activated protein kinase kinase kinase 20 from Homo sapiens (Human).